A 332-amino-acid polypeptide reads, in one-letter code: COP9 signalosome complex subunit 5 (332 aa).

One can recognise an MPN domain in the interval 54 to 191; the sequence is VKISAIALLK…IGAFRTYPQG (138 aa). Zn(2+)-binding residues include His-137, His-139, and Asp-150. Positions 137–150 match the JAMM motif motif; sequence HSHPGYGCWLSGID.

This sequence belongs to the peptidase M67A family. CSN5 subfamily. In terms of assembly, component of the CSN complex. The holocomplex is comprised of 8 subunits csn1-8. In the complex, it probably interacts directly with csn1, csn2, csn3, csn4, csn6 and csn8. A divalent metal cation is required as a cofactor.

It is found in the cytoplasm. The protein resides in the nucleus. In terms of biological role, probable protease subunit of the COP9 signalosome complex (CSN), a complex involved in various cellular and developmental processes. The CSN complex is an essential regulator of the ubiquitin (Ubl) conjugation pathway by mediating the deneddylation of the cullin subunits of E3 ligasew complexes, leading to modify the Ubl ligase activity. In the complex, it probably acts as the catalytic center that mediates the cleavage of Nedd8 from cullins. Csn5 is essential for growth or survival. The protein is COP9 signalosome complex subunit 5 (csn5) of Dictyostelium discoideum (Social amoeba).